The primary structure comprises 420 residues: Pyrophosphate--fructose 6-phosphate 1-phosphotransferase (420 aa).

Residue Gly-13 coordinates diphosphate. Residues 142–144 (TVD), 190–192 (MGR), Glu-247, and 297–300 (YLQR) contribute to the substrate site. Asp-144 serves as the catalytic Proton acceptor.

Belongs to the phosphofructokinase type A (PFKA) family. PPi-dependent PFK group II subfamily. Clade 'B2' sub-subfamily. In terms of assembly, homodimer. Requires Mg(2+) as cofactor. Co(2+) serves as cofactor. Mn(2+) is required as a cofactor.

The protein resides in the cytoplasm. The catalysed reaction is beta-D-fructose 6-phosphate + diphosphate = beta-D-fructose 1,6-bisphosphate + phosphate + H(+). It functions in the pathway carbohydrate degradation; glycolysis; D-glyceraldehyde 3-phosphate and glycerone phosphate from D-glucose: step 3/4. Its activity is regulated as follows. Non-allosteric. Catalyzes the phosphorylation of D-fructose 6-phosphate, the first committing step of glycolysis. Uses inorganic phosphate (PPi) as phosphoryl donor instead of ATP like common ATP-dependent phosphofructokinases (ATP-PFKs), which renders the reaction reversible, and can thus function both in glycolysis and gluconeogenesis. Consistently, PPi-PFK can replace the enzymes of both the forward (ATP-PFK) and reverse (fructose-bisphosphatase (FBPase)) reactions. This Methylococcus capsulatus (strain ATCC 33009 / NCIMB 11132 / Bath) protein is Pyrophosphate--fructose 6-phosphate 1-phosphotransferase.